The sequence spans 139 residues: Putative pre-16S rRNA nuclease (139 aa).

Belongs to the YqgF nuclease family.

It localises to the cytoplasm. Functionally, could be a nuclease involved in processing of the 5'-end of pre-16S rRNA. This chain is Putative pre-16S rRNA nuclease, found in Dictyoglomus thermophilum (strain ATCC 35947 / DSM 3960 / H-6-12).